Here is a 307-residue protein sequence, read N- to C-terminus: Dihydroorotate dehydrogenase A (fumarate) (307 aa).

Residues serine 21 and 46-47 (KT) each bind FMN. Substrate contacts are provided by residues lysine 46, 70–74 (NSVGL), and asparagine 130. Residue asparagine 130 participates in FMN binding. The active-site Nucleophile is the cysteine 133. FMN contacts are provided by lysine 168 and isoleucine 194. Residue 195–196 (NT) participates in substrate binding. FMN-binding positions include glycine 220, 246-247 (GG), and 268-269 (GS).

The protein belongs to the dihydroorotate dehydrogenase family. Type 1 subfamily. Homodimer. The cofactor is FMN.

Its subcellular location is the cytoplasm. It catalyses the reaction (S)-dihydroorotate + fumarate = orotate + succinate. Its pathway is pyrimidine metabolism; UMP biosynthesis via de novo pathway. Its function is as follows. Catalyzes the conversion of dihydroorotate to orotate with fumarate as the electron acceptor. This chain is Dihydroorotate dehydrogenase A (fumarate) (pyrD), found in Lactobacillus helveticus (strain DPC 4571).